A 363-amino-acid chain; its full sequence is Protein CPn_1058/CP_0792/CPj1058/CpB1100 (363 aa).

The first 27 residues, 1-27, serve as a signal peptide directing secretion; that stretch reads MKLYQTLRGIVLVSTGCIFLGMHGGYA.

It belongs to the chlamydial CPn_1058/CT_355/TC_0634 family.

This chain is Protein CPn_1058/CP_0792/CPj1058/CpB1100, found in Chlamydia pneumoniae (Chlamydophila pneumoniae).